Reading from the N-terminus, the 115-residue chain is Cholecystokinin (115 aa).

Residues 1-20 form the signal peptide; sequence MKCGVCLCVVMAVLAAGALA. Propeptides lie at residues 21-45 and 47-63; these read QPVV…RQLR and VLRP…ALLA. Tyr-97 carries the sulfotyrosine modification. Phe-103 is modified (phenylalanine amide). The propeptide occupies 107 to 115; the sequence is SAEDYEYPS. A sulfotyrosine mark is found at Tyr-111 and Tyr-113.

Belongs to the gastrin/cholecystokinin family. In terms of assembly, binds to CCK-A receptors in the pancreas and CCK-B receptors in the brain. In terms of processing, the precursor is cleaved by proteases to produce a number of active cholecystokinins. Sulfation of Tyr-97 is essential for receptor activation. The shortest form (CCK8) is predominantly found in the brain, whereas the larger ones are found in the intestine.

Its subcellular location is the secreted. Its function is as follows. This peptide hormone induces gall bladder contraction and the release of pancreatic enzymes in the gut. Its function in the brain is not clear. Binding to CCK-A receptors stimulates amylase release from the pancreas, binding to CCK-B receptors stimulates gastric acid secretion. The protein is Cholecystokinin (Cck) of Rattus norvegicus (Rat).